Here is a 128-residue protein sequence, read N- to C-terminus: Aspartate 1-decarboxylase (128 aa).

Ser-25 (schiff-base intermediate with substrate; via pyruvic acid) is an active-site residue. Ser-25 is modified (pyruvic acid (Ser)). Thr-57 serves as a coordination point for substrate. Tyr-58 functions as the Proton donor in the catalytic mechanism. 73–75 (GAA) contacts substrate.

It belongs to the PanD family. As to quaternary structure, heterooctamer of four alpha and four beta subunits. Requires pyruvate as cofactor. In terms of processing, is synthesized initially as an inactive proenzyme, which is activated by self-cleavage at a specific serine bond to produce a beta-subunit with a hydroxyl group at its C-terminus and an alpha-subunit with a pyruvoyl group at its N-terminus.

The protein resides in the cytoplasm. It catalyses the reaction L-aspartate + H(+) = beta-alanine + CO2. It functions in the pathway cofactor biosynthesis; (R)-pantothenate biosynthesis; beta-alanine from L-aspartate: step 1/1. Functionally, catalyzes the pyruvoyl-dependent decarboxylation of aspartate to produce beta-alanine. This is Aspartate 1-decarboxylase from Caldicellulosiruptor saccharolyticus (strain ATCC 43494 / DSM 8903 / Tp8T 6331).